We begin with the raw amino-acid sequence, 182 residues long: ATP-dependent protease subunit HslV (182 aa).

Residue T12 is part of the active site. The Na(+) site is built by A167, C170, and T173.

Belongs to the peptidase T1B family. HslV subfamily. As to quaternary structure, a double ring-shaped homohexamer of HslV is capped on each side by a ring-shaped HslU homohexamer. The assembly of the HslU/HslV complex is dependent on binding of ATP.

The protein resides in the cytoplasm. The catalysed reaction is ATP-dependent cleavage of peptide bonds with broad specificity.. With respect to regulation, allosterically activated by HslU binding. Its function is as follows. Protease subunit of a proteasome-like degradation complex believed to be a general protein degrading machinery. The sequence is that of ATP-dependent protease subunit HslV from Prosthecochloris aestuarii (strain DSM 271 / SK 413).